A 500-amino-acid polypeptide reads, in one-letter code: L-arabinose isomerase (500 aa).

4 residues coordinate Mn(2+): Glu306, Glu333, His350, and His450.

This sequence belongs to the arabinose isomerase family. As to quaternary structure, homohexamer. The cofactor is Mn(2+).

It catalyses the reaction beta-L-arabinopyranose = L-ribulose. Its pathway is carbohydrate degradation; L-arabinose degradation via L-ribulose; D-xylulose 5-phosphate from L-arabinose (bacterial route): step 1/3. Functionally, catalyzes the conversion of L-arabinose to L-ribulose. The chain is L-arabinose isomerase from Klebsiella pneumoniae subsp. pneumoniae (strain ATCC 700721 / MGH 78578).